The following is a 236-amino-acid chain: 15,16-dihydrobiliverdin:ferredoxin oxidoreductase (236 aa).

This sequence belongs to the HY2 family.

The enzyme catalyses 15,16-dihydrobiliverdin + oxidized 2[4Fe-4S]-[ferredoxin] = biliverdin IXalpha + reduced 2[4Fe-4S]-[ferredoxin] + 2 H(+). Its function is as follows. Catalyzes the two-electron reduction of biliverdin IX-alpha at the C15 methine bridge. The protein is 15,16-dihydrobiliverdin:ferredoxin oxidoreductase of Prochlorococcus marinus (strain AS9601).